The chain runs to 190 residues: Ribonuclease HII (190 aa).

Residues 1–190 (MAGVDEVGRG…FCRKIIENPD (190 aa)) form the RNase H type-2 domain. Aspartate 5, glutamate 6, and aspartate 101 together coordinate a divalent metal cation.

This sequence belongs to the RNase HII family. Mn(2+) is required as a cofactor. It depends on Mg(2+) as a cofactor.

It is found in the cytoplasm. It carries out the reaction Endonucleolytic cleavage to 5'-phosphomonoester.. Functionally, endonuclease that specifically degrades the RNA of RNA-DNA hybrids. This is Ribonuclease HII (rnhB) from Synechocystis sp. (strain ATCC 27184 / PCC 6803 / Kazusa).